The chain runs to 327 residues: Leucotoxin LukD (327 aa).

The N-terminal stretch at 1-26 (MKIEKLGKSSVASSIALLLLSNTVDA) is a signal peptide.

The protein belongs to the aerolysin family. As to quaternary structure, toxicity requires sequential binding and synergistic association of a class S and a class F component which form heterooligomeric complexes. LukE (class S) associates with LukD (class F). LukD can also associate with HlgA.

The protein resides in the secreted. Functionally, part of a bi-component leucotoxin that acts by forming pores in the membrane of the target cells. LukE-LukD is as effective as the Panton-Valentine leucocidin (PVL) for inducing dermonecrosis when injected in the rabbit skin, but not hemolytic and poorly leucotoxic on human blood cells compared to other leucotoxins expressed by S.aureus. HlgA-LukD is a Ca(2+) channel inducer. The polypeptide is Leucotoxin LukD (lukD) (Staphylococcus aureus).